Consider the following 255-residue polypeptide: NAD-dependent protein deacylase (255 aa).

The 252-residue stretch at 1 to 252 (MPKLVVFSGA…AEIEQELEQF (252 aa)) folds into the Deacetylase sirtuin-type domain. 9-28 (GAGLSAESGLETFRDNGGLW) contributes to the NAD(+) binding site. Positions 53 and 56 each coordinate substrate. 103 to 106 (QNVD) is an NAD(+) binding site. The active-site Proton acceptor is the H121. The Zn(2+) site is built by C129, C132, C148, and C151. NAD(+) contacts are provided by residues 190–192 (GTS), 218–220 (NLQ), and T238.

Belongs to the sirtuin family. Class III subfamily. It depends on Zn(2+) as a cofactor.

The protein resides in the cytoplasm. The catalysed reaction is N(6)-acetyl-L-lysyl-[protein] + NAD(+) + H2O = 2''-O-acetyl-ADP-D-ribose + nicotinamide + L-lysyl-[protein]. It carries out the reaction N(6)-succinyl-L-lysyl-[protein] + NAD(+) + H2O = 2''-O-succinyl-ADP-D-ribose + nicotinamide + L-lysyl-[protein]. In terms of biological role, NAD-dependent lysine deacetylase and desuccinylase that specifically removes acetyl and succinyl groups on target proteins. Modulates the activities of several proteins which are inactive in their acylated form. This Helicobacter hepaticus (strain ATCC 51449 / 3B1) protein is NAD-dependent protein deacylase.